A 362-amino-acid polypeptide reads, in one-letter code: Chorismate synthase (362 aa).

Position 47 (R47) interacts with NADP(+). FMN contacts are provided by residues 124 to 126 (RAS), G286, 301 to 305 (KPTAT), and R327.

The protein belongs to the chorismate synthase family. Homotetramer. Requires FMNH2 as cofactor.

The catalysed reaction is 5-O-(1-carboxyvinyl)-3-phosphoshikimate = chorismate + phosphate. It functions in the pathway metabolic intermediate biosynthesis; chorismate biosynthesis; chorismate from D-erythrose 4-phosphate and phosphoenolpyruvate: step 7/7. Its function is as follows. Catalyzes the anti-1,4-elimination of the C-3 phosphate and the C-6 proR hydrogen from 5-enolpyruvylshikimate-3-phosphate (EPSP) to yield chorismate, which is the branch point compound that serves as the starting substrate for the three terminal pathways of aromatic amino acid biosynthesis. This reaction introduces a second double bond into the aromatic ring system. This is Chorismate synthase from Synechococcus sp. (strain WH7803).